Consider the following 130-residue polypeptide: Small ribosomal subunit protein uS11 (130 aa).

Belongs to the universal ribosomal protein uS11 family. As to quaternary structure, part of the 30S ribosomal subunit. Interacts with proteins S7 and S18. Binds to IF-3.

Its function is as follows. Located on the platform of the 30S subunit, it bridges several disparate RNA helices of the 16S rRNA. Forms part of the Shine-Dalgarno cleft in the 70S ribosome. The chain is Small ribosomal subunit protein uS11 from Prochlorococcus marinus (strain MIT 9215).